The chain runs to 191 residues: Large ribosomal subunit protein bL9 (191 aa).

This sequence belongs to the bacterial ribosomal protein bL9 family.

Its function is as follows. Binds to the 23S rRNA. The sequence is that of Large ribosomal subunit protein bL9 from Granulibacter bethesdensis (strain ATCC BAA-1260 / CGDNIH1).